Here is a 229-residue protein sequence, read N- to C-terminus: 2,3-bisphosphoglycerate-dependent phosphoglycerate mutase (229 aa).

Residues 8–15 (RHGESAWN), 21–22 (TG), R60, 87–90 (ERHY), K98, 114–115 (RR), and 183–184 (GN) each bind substrate. H9 (tele-phosphohistidine intermediate) is an active-site residue. E87 serves as the catalytic Proton donor/acceptor.

The protein belongs to the phosphoglycerate mutase family. BPG-dependent PGAM subfamily. As to quaternary structure, homodimer.

The catalysed reaction is (2R)-2-phosphoglycerate = (2R)-3-phosphoglycerate. It functions in the pathway carbohydrate degradation; glycolysis; pyruvate from D-glyceraldehyde 3-phosphate: step 3/5. Functionally, catalyzes the interconversion of 2-phosphoglycerate and 3-phosphoglycerate. This chain is 2,3-bisphosphoglycerate-dependent phosphoglycerate mutase, found in Polynucleobacter necessarius subsp. necessarius (strain STIR1).